The sequence spans 555 residues: Intraflagellar transport protein 56 (555 aa).

3 TPR repeats span residues 57–90 (LKNL…EDPD), 151–184 (IEDQ…HRDY), and 393–426 (DDFN…KYRN).

Belongs to the IFT56 family. In terms of assembly, component of the IFT complex B.

Its subcellular location is the cell projection. It localises to the cilium. The protein resides in the flagellum. Functionally, component of the intraflagellar transport (IFT) complex B required for transport of proteins in the motile cilium. Required for transport of specific ciliary cargo proteins related to motility, while it is neither required for IFT complex B assembly or motion nor for cilium assembly. In Chlamydomonas reinhardtii (Chlamydomonas smithii), this protein is Intraflagellar transport protein 56.